The sequence spans 156 residues: Snaclec A2 (156 aa).

Positions 1-23 (MGRLISVSFGLLVVFLSLSGTGA) are cleaved as a signal peptide. 3 cysteine pairs are disulfide-bonded: Cys-27–Cys-38, Cys-55–Cys-154, and Cys-129–Cys-146. One can recognise a C-type lectin domain in the interval 34–155 (HEGHCYKVFN…CGQPYRFTCE (122 aa)).

Belongs to the snaclec family. As to quaternary structure, heterodimer; disulfide-linked. In terms of tissue distribution, expressed by the venom gland.

It is found in the secreted. Its function is as follows. Interferes with one step of hemostasis (modulation of platelet aggregation, or coagulation cascade, for example). This is Snaclec A2 from Macrovipera lebetinus (Levantine viper).